A 32-amino-acid polypeptide reads, in one-letter code: MASEIFGTAAIFWVLIPAGLLGGALLLKLQGE.

A helical membrane pass occupies residues 5-25 (IFGTAAIFWVLIPAGLLGGAL).

The protein belongs to the PetM family. As to quaternary structure, the 4 large subunits of the cytochrome b6-f complex are cytochrome b6, subunit IV (17 kDa polypeptide, PetD), cytochrome f and the Rieske protein, while the 4 small subunits are PetG, PetL, PetM and PetN. The complex functions as a dimer.

It localises to the cellular thylakoid membrane. Functionally, component of the cytochrome b6-f complex, which mediates electron transfer between photosystem II (PSII) and photosystem I (PSI), cyclic electron flow around PSI, and state transitions. This is Cytochrome b6-f complex subunit 7 from Prochlorococcus marinus (strain SARG / CCMP1375 / SS120).